The chain runs to 190 residues: Hypoxanthine/guanine phosphoribosyltransferase (190 aa).

Belongs to the purine/pyrimidine phosphoribosyltransferase family. Archaeal HPRT subfamily. In terms of assembly, homodimer.

It localises to the cytoplasm. It carries out the reaction IMP + diphosphate = hypoxanthine + 5-phospho-alpha-D-ribose 1-diphosphate. The catalysed reaction is GMP + diphosphate = guanine + 5-phospho-alpha-D-ribose 1-diphosphate. It functions in the pathway purine metabolism; IMP biosynthesis via salvage pathway; IMP from hypoxanthine: step 1/1. Its function is as follows. Catalyzes a salvage reaction resulting in the formation of IMP that is energically less costly than de novo synthesis. The polypeptide is Hypoxanthine/guanine phosphoribosyltransferase (Methanohalophilus mahii (strain ATCC 35705 / DSM 5219 / SLP)).